Consider the following 208-residue polypeptide: ATP-dependent Clp protease proteolytic subunit (208 aa).

Serine 105 serves as the catalytic Nucleophile. Residue histidine 130 is part of the active site.

The protein belongs to the peptidase S14 family. As to quaternary structure, fourteen ClpP subunits assemble into 2 heptameric rings which stack back to back to give a disk-like structure with a central cavity, resembling the structure of eukaryotic proteasomes.

It localises to the cytoplasm. The enzyme catalyses Hydrolysis of proteins to small peptides in the presence of ATP and magnesium. alpha-casein is the usual test substrate. In the absence of ATP, only oligopeptides shorter than five residues are hydrolyzed (such as succinyl-Leu-Tyr-|-NHMec, and Leu-Tyr-Leu-|-Tyr-Trp, in which cleavage of the -Tyr-|-Leu- and -Tyr-|-Trp bonds also occurs).. In terms of biological role, cleaves peptides in various proteins in a process that requires ATP hydrolysis. Has a chymotrypsin-like activity. Plays a major role in the degradation of misfolded proteins. The polypeptide is ATP-dependent Clp protease proteolytic subunit (Xylella fastidiosa (strain 9a5c)).